The sequence spans 189 residues: Early E3 20.5 kDa glycoprotein (189 aa).

N-linked (GlcNAc...) asparagine; by host glycans are attached at residues Asn73 and Asn137.

It belongs to the adenoviridae E3_20 family.

Its function is as follows. E3 proteins seem to be dispensable for virus growth in tissue culture cells. They are potentially important for virus growth under special conditions; E3 region may help adenoviruses to evade the immune surveillance of the host. The chain is Early E3 20.5 kDa glycoprotein from Homo sapiens (Human).